The sequence spans 157 residues: MFDILMYLFENYVHSEIELLVDEDELTKELTRAGFHQADILKALSWLERLADLQESDKPYLCNHAQQSFRIYTKDEMAKLDVESRGFLLFLEQIQVLSVETREMVIDRVMELDEASLILDDLKWVILMVLFNVPGNESAYEQMEDLIFEQPEGRLHS.

Belongs to the Smg family.

This is Protein Smg homolog from Shewanella denitrificans (strain OS217 / ATCC BAA-1090 / DSM 15013).